The sequence spans 183 residues: Photosystem I assembly protein Ycf4 (183 aa).

2 helical membrane-spanning segments follow: residues 21 to 43 (YWWA…SSRL) and 58 to 80 (FIPQ…TYLW).

This sequence belongs to the Ycf4 family.

The protein resides in the plastid. It is found in the chloroplast thylakoid membrane. In terms of biological role, seems to be required for the assembly of the photosystem I complex. This chain is Photosystem I assembly protein Ycf4, found in Nephroselmis olivacea (Green alga).